Here is a 203-residue protein sequence, read N- to C-terminus: Large ribosomal subunit protein uL13 (203 aa).

A2 is subject to N-acetylalanine. Citrulline is present on R59. S77 is subject to Phosphoserine. R140 is modified (citrulline). Residue K191 is modified to N6-acetyllysine.

The protein belongs to the universal ribosomal protein uL13 family. In terms of assembly, component of the 60S ribosome. Component of the GAIT complex. Interacts with EIF4G1. Phosphorylation at Ser-77 upon interferon-gamma treatment in macrophages involves a DAPK1-DAPK3 kinase cascade and is causing release from the ribosome, association with the GAIT complex and subsequent involvement in transcript-selective translation inhibition. In terms of processing, citrullinated by PADI4.

It is found in the cytoplasm. Functionally, associated with ribosomes but is not required for canonical ribosome function and has extra-ribosomal functions. Component of the GAIT (gamma interferon-activated inhibitor of translation) complex which mediates interferon-gamma-induced transcript-selective translation inhibition in inflammation processes. Upon interferon-gamma activation and subsequent phosphorylation dissociates from the ribosome and assembles into the GAIT complex which binds to stem loop-containing GAIT elements in the 3'-UTR of diverse inflammatory mRNAs (such as ceruplasmin) and suppresses their translation. In the GAIT complex interacts with m7G cap-bound eIF4G at or near the eIF3-binding site and blocks the recruitment of the 43S ribosomal complex. Involved in methylation of rRNA. In Bos taurus (Bovine), this protein is Large ribosomal subunit protein uL13 (RPL13A).